We begin with the raw amino-acid sequence, 4306 residues long: Cytoplasmic dynein 2 heavy chain 1 (4306 aa).

The stem stretch occupies residues M1–Q1650. An ATP-binding site is contributed by L145 to S152. Positions K669 to H696 form a coiled coil. AAA regions lie at residues Y1651–G1875, S1941–D2161, L2249–G2505, and H2617–K2862. Residues G1689–T1696, G1979–S1986, G2291–G2298, and G2655–R2662 each bind ATP. The interval A2880–I3168 is stalk. 3 coiled-coil regions span residues L2896 to Q2981, L3108 to L3199, and I3407 to E3441. AAA regions lie at residues L3243 to D3472 and M3689 to R3904.

The protein belongs to the dynein heavy chain family. In terms of assembly, the cytoplasmic dynein complex 2 is probably composed by a heavy chain DYNC2H1 homodimer and a number of DYNC2LI1 light intermediate chains. Widely expressed both in ciliated and unciliated tissues. Detected in brain and testis (at protein level).

It is found in the cytoplasm. Its subcellular location is the cytoskeleton. The protein resides in the cilium axoneme. It localises to the cell membrane. May function as a motor for intraflagellar retrograde transport. Functions in cilia biogenesis. May play a role in transport between endoplasmic reticulum and Golgi or organization of the Golgi in cells. The chain is Cytoplasmic dynein 2 heavy chain 1 (Dync2h1) from Rattus norvegicus (Rat).